Here is a 360-residue protein sequence, read N- to C-terminus: Dihydroorotate dehydrogenase (quinone) (360 aa).

Residues 66 to 70 (AGFDK) and T90 each bind FMN. K70 contributes to the substrate binding site. Residue 115 to 119 (NRMGF) participates in substrate binding. The FMN site is built by N143 and N176. N176 contributes to the substrate binding site. S179 (nucleophile) is an active-site residue. A substrate-binding site is contributed by N181. 2 residues coordinate FMN: K212 and T240. 241-242 (NT) is a substrate binding site. Residues G264, G293, and 314–315 (YT) each bind FMN.

The protein belongs to the dihydroorotate dehydrogenase family. Type 2 subfamily. As to quaternary structure, monomer. FMN is required as a cofactor.

The protein resides in the cell membrane. The enzyme catalyses (S)-dihydroorotate + a quinone = orotate + a quinol. It participates in pyrimidine metabolism; UMP biosynthesis via de novo pathway; orotate from (S)-dihydroorotate (quinone route): step 1/1. In terms of biological role, catalyzes the conversion of dihydroorotate to orotate with quinone as electron acceptor. The polypeptide is Dihydroorotate dehydrogenase (quinone) (Mycobacterium marinum (strain ATCC BAA-535 / M)).